The primary structure comprises 489 residues: L-asparagine permease (489 aa).

The next 12 helical transmembrane spans lie at 38–58, 62–82, 113–133, 150–170, 175–195, 223–243, 268–288, 302–322, 357–377, 382–402, 426–446, and 452–472; these read HVNM…GAGG, DAGP…FFVV, VAGW…ITAI, VLAL…VKIF, FWFA…GIFL, VMPV…LELV, VALF…SSLY, IGVP…AMSS, YGGI…NYLV, FEIV…IIMI, SPVT…LMWN, and RKTV…WFGV.

This sequence belongs to the amino acid-polyamine-organocation (APC) superfamily. Amino acid transporter (AAT) (TC 2.A.3.1) family.

It localises to the cell membrane. This chain is L-asparagine permease (ansP), found in Streptomyces coelicolor (strain ATCC BAA-471 / A3(2) / M145).